The following is a 1149-amino-acid chain: Guanine nucleotide exchange factor DBS (1149 aa).

A CRAL-TRIO domain is found at 52-224; it reads AATASDEIMH…DLGGTLDYCH (173 aa). The Spectrin repeat unit spans residues 351–456; sequence LQLRHFEQGF…VTRRRGLLSK (106 aa). A phosphoserine mark is found at Ser457, Ser462, Ser471, and Ser480. Positions 503 to 529 form a coiled coil; sequence LETGAENKIQELNEIYKEYECILNQDL. Positions 555 to 627 are disordered; it reads KKLAAKQTRP…RTSSTGEEEE (73 aa). The segment covering 583 to 594 has biased composition (low complexity); that stretch reads PGSWRSSENSSS. Basic and acidic residues predominate over residues 607 to 616; the sequence is AKSEMSEPRQ. Position 621 is a phosphoserine (Ser621). Position 622 is a phosphothreonine (Thr622). Residues 632-812 form the DH domain; it reads LRRHVMNELL…LGILKAVNDS (181 aa). A PH domain is found at 841 to 950; it reads TDHKKGHTKV…IRKVLTSQLQ (110 aa). A disordered region spans residues 956-1033; sequence SQHRALEQSH…EAPEEDGGWS (78 aa). The segment covering 966–978 has biased composition (low complexity); sequence SLPLPTPSSTSPT. 4 positions are modified to phosphoserine: Ser1033, Ser1034, Ser1041, and Ser1042. Positions 1055–1116 constitute an SH3 domain; it reads LVPGKYTVVM…PASSLSTLLG (62 aa).

It belongs to the MCF2 family. As to quaternary structure, interacts with GTP-bound RAC1. Interacts with CDC42. Interacts with RHOA. Interacts with CCPG1, which results in specific inhibition of its exchange activity toward RHOA, but does not affect its activity on CDC42. In terms of tissue distribution, expressed at low levels in several hemopoietic cell lines and in thymus and spleen, and at higher levels in other tissues, particularly in brain.

The protein localises to the cytoplasm. It is found in the cell membrane. Its function is as follows. Guanine nucleotide exchange factor that catalyzes guanine nucleotide exchange on RHOA and CDC42, and thereby contributes to the regulation of RHOA and CDC42 signaling pathways. Seems to lack activity with RAC1. Becomes activated and highly tumorigenic by truncation of the N-terminus. The polypeptide is Guanine nucleotide exchange factor DBS (Mcf2l) (Mus musculus (Mouse)).